The chain runs to 396 residues: MDISASPSIADGPVYTHQTVRLDSGLDLECGVHLAPLEVAYCTYGTLSPARDNAILVCHALTGDQYLAERNPLTGKPGWWSRMVGPGLPIDTDRYFVVCSNVLGGCMGTTGPRSICAETGKAWDSEFPPITMHDIVAAQAKLIDHLGIDRLFAVIGGSMGGMQALTWAADFPDRVFAAMPIATSPFHSAQNIAFNEVSRQAIFADPDWHDGHYRDFGAIPARGLGVARMMAHITYLSEEALSRKFGRRVRHDAATAVPASSSPSLFGEMFEVESYLRHQGSSFVRRFDANSYLTITRAMDYFDLAAEHDGDLANPFRKSQTRFCVVSFSSDWLFPTSQSRLLVRALNRAGANVSFVEIESDRGHDAFLLEEPDFDRTIRGFIAGAAEHAALKAGER.

Residues 53–370 (NAILVCHALT…DRGHDAFLLE (318 aa)) enclose the AB hydrolase-1 domain. Serine 158 serves as the catalytic Nucleophile. Residue arginine 228 coordinates substrate. Catalysis depends on residues aspartate 331 and histidine 364. Aspartate 365 contributes to the substrate binding site.

This sequence belongs to the AB hydrolase superfamily. MetX family. As to quaternary structure, homodimer.

The protein resides in the cytoplasm. It catalyses the reaction L-homoserine + acetyl-CoA = O-acetyl-L-homoserine + CoA. Its pathway is amino-acid biosynthesis; L-methionine biosynthesis via de novo pathway; O-acetyl-L-homoserine from L-homoserine: step 1/1. Functionally, transfers an acetyl group from acetyl-CoA to L-homoserine, forming acetyl-L-homoserine. This Gluconobacter oxydans (strain 621H) (Gluconobacter suboxydans) protein is Homoserine O-acetyltransferase.